The following is a 325-amino-acid chain: Tagatose 1,6-diphosphate aldolase 1 (325 aa).

The protein belongs to the aldolase LacD family.

It carries out the reaction D-tagatofuranose 1,6-bisphosphate = D-glyceraldehyde 3-phosphate + dihydroxyacetone phosphate. The protein operates within carbohydrate metabolism; D-tagatose 6-phosphate degradation; D-glyceraldehyde 3-phosphate and glycerone phosphate from D-tagatose 6-phosphate: step 2/2. This is Tagatose 1,6-diphosphate aldolase 1 (lacD1) from Streptococcus pyogenes serotype M3 (strain SSI-1).